The chain runs to 256 residues: Major prion protein (256 aa).

The signal sequence occupies residues Met-1–Cys-24. The segment at Lys-25–Ala-233 is interaction with GRB2, ERI3 and SYN1. The tract at residues Pro-28–Thr-110 is disordered. Repeat copies occupy residues Pro-54–Gln-62, Pro-63–Gln-70, Pro-71–Gln-78, Pro-79–Gln-86, and Pro-87–Gln-95. The interval Pro-54–Gln-95 is 5 X 8 AA tandem repeats of P-H-G-G-G-W-G-Q. Over residues Gln-55–Gly-97 the composition is skewed to gly residues. Residues His-64, Gly-65, Gly-66, His-72, Gly-73, Gly-74, His-80, Gly-81, Gly-82, His-88, Gly-90, and Gly-91 each contribute to the Cu(2+) site. Cysteines 182 and 217 form a disulfide. Asn-184 and Asn-200 each carry an N-linked (GlcNAc...) asparagine glycan. Ala-233 carries GPI-anchor amidated alanine lipidation. The propeptide at Ser-234–Gly-256 is removed in mature form.

The protein belongs to the prion family. As to quaternary structure, monomer and homodimer. Has a tendency to aggregate into amyloid fibrils containing a cross-beta spine, formed by a steric zipper of superposed beta-strands. Soluble oligomers may represent an intermediate stage on the path to fibril formation. Copper binding may promote oligomerization. Interacts with GRB2, APP, ERI3/PRNPIP and SYN1. Mislocalized cytosolically exposed PrP interacts with MGRN1; this interaction alters MGRN1 subcellular location and causes lysosomal enlargement. Interacts with KIAA1191.

The protein localises to the cell membrane. The protein resides in the golgi apparatus. Functionally, its primary physiological function is unclear. Has cytoprotective activity against internal or environmental stresses. May play a role in neuronal development and synaptic plasticity. May be required for neuronal myelin sheath maintenance. May play a role in iron uptake and iron homeostasis. Soluble oligomers are toxic to cultured neuroblastoma cells and induce apoptosis (in vitro). Association with GPC1 (via its heparan sulfate chains) targets PRNP to lipid rafts. Also provides Cu(2+) or Zn(2+) for the ascorbate-mediated GPC1 deaminase degradation of its heparan sulfate side chains. The protein is Major prion protein (PRNP) of Odocoileus hemionus (Mule deer).